Consider the following 289-residue polypeptide: Cbb3-type cytochrome c oxidase subunit FixP (289 aa).

At 1-33 the chain is on the cytoplasmic side; that stretch reads MADKHKHVDEVSGVETTGHEWDGIRELNNPLPR. A helical transmembrane segment spans residues 34–56; it reads WWVYSFYATIIWAIGYAVAYPSW. Residues 57–289 lie on the Periplasmic side of the membrane; sequence PMLTEATKGV…VFVHSLGGGE (233 aa). 2 Cytochrome c domains span residues 110-198 and 205-286; these read FAVS…MSLT and HLVE…HSLG. Heme c contacts are provided by Cys123, Cys126, His127, Met175, Cys218, Cys221, His222, and Met263.

This sequence belongs to the CcoP / FixP family. As to quaternary structure, component of the cbb3-type cytochrome c oxidase at least composed of FixN, FixO, FixQ and FixP. It depends on heme c as a cofactor.

It localises to the cell inner membrane. The protein operates within energy metabolism; oxidative phosphorylation. C-type cytochrome. Part of the cbb3-type cytochrome c oxidase complex. FixP subunit is required for transferring electrons from donor cytochrome c via its heme groups to FixO subunit. From there, electrons are shuttled to the catalytic binuclear center of FixN subunit where oxygen reduction takes place. The complex also functions as a proton pump. This Sinorhizobium medicae (strain WSM419) (Ensifer medicae) protein is Cbb3-type cytochrome c oxidase subunit FixP.